Consider the following 331-residue polypeptide: UDP-GalNAc:beta-1,3-N-acetylgalactosaminyltransferase 1 (331 aa).

The Cytoplasmic segment spans residues 1–20; that stretch reads MAPAVLTALPNRMSLRSLKW. Residues 21–43 traverse the membrane as a helical; Signal-anchor for type II membrane protein segment; that stretch reads SLLLLSLLSFLVIWYLSLPHYNV. Over 44 to 331 the chain is Lumenal; the sequence is IERVNWMYFY…VMLRNTTCHY (288 aa). Asparagine 72, asparagine 154, asparagine 198, asparagine 212, and asparagine 326 each carry an N-linked (GlcNAc...) asparagine glycan.

This sequence belongs to the glycosyltransferase 31 family. Mg(2+) is required as a cofactor. Detected in brain, ovary, kidney, uterus and stomach. In ovary, specifically expressed in follicular granulosa cells and shows particularly strong expression at later stages of follicle development.

It is found in the golgi apparatus membrane. It catalyses the reaction a globoside Gb3Cer (d18:1(4E)) + UDP-N-acetyl-alpha-D-galactosamine = a globoside Gb4Cer (d18:1(4E)) + UDP + H(+). The protein operates within protein modification; protein glycosylation. In terms of biological role, transfers N-acetylgalactosamine onto globotriaosylceramide. Plays a critical role in preimplantation stage embryonic development. This Mus musculus (Mouse) protein is UDP-GalNAc:beta-1,3-N-acetylgalactosaminyltransferase 1.